The primary structure comprises 335 residues: DNA-directed RNA polymerase subunit alpha (335 aa).

Positions 1–231 (MVREKVTVST…DLFIPFLHME (231 aa)) are alpha N-terminal domain (alpha-NTD). Residues 262–335 (KKKLSLESIF…FALDLPKNLN (74 aa)) are alpha C-terminal domain (alpha-CTD).

This sequence belongs to the RNA polymerase alpha chain family. In plastids the minimal PEP RNA polymerase catalytic core is composed of four subunits: alpha, beta, beta', and beta''. When a (nuclear-encoded) sigma factor is associated with the core the holoenzyme is formed, which can initiate transcription.

It is found in the plastid. The catalysed reaction is RNA(n) + a ribonucleoside 5'-triphosphate = RNA(n+1) + diphosphate. DNA-dependent RNA polymerase catalyzes the transcription of DNA into RNA using the four ribonucleoside triphosphates as substrates. This Cuscuta reflexa (Southern Asian dodder) protein is DNA-directed RNA polymerase subunit alpha.